Reading from the N-terminus, the 157-residue chain is MKIVLLVVGKTDSKLMAQATEEYIRRLSHYVSFEVEVIPDVRLGSKLSSEQQKDAEGREILARLRPSDSTVLLDERGREYSSMEFSAFLQKKMLTGTRRMVFVIGGPYGFSPAVQEAVADRISLSRMTFSHQMIRLFFTEQVYRAMTILNHEPYHHE.

Residues leucine 73, glycine 105, and 124 to 129 each bind S-adenosyl-L-methionine; that span reads LSRMTF.

It belongs to the RNA methyltransferase RlmH family. As to quaternary structure, homodimer.

It localises to the cytoplasm. It carries out the reaction pseudouridine(1915) in 23S rRNA + S-adenosyl-L-methionine = N(3)-methylpseudouridine(1915) in 23S rRNA + S-adenosyl-L-homocysteine + H(+). Functionally, specifically methylates the pseudouridine at position 1915 (m3Psi1915) in 23S rRNA. The chain is Ribosomal RNA large subunit methyltransferase H from Porphyromonas gingivalis (strain ATCC 33277 / DSM 20709 / CIP 103683 / JCM 12257 / NCTC 11834 / 2561).